The sequence spans 416 residues: Serine/threonine-protein phosphatase PP2A-like PPG1 (416 aa).

Mn(2+)-binding residues include Asp62, His64, Asp90, and Asn122. His123 functions as the Proton donor in the catalytic mechanism. The Mn(2+) site is built by His173 and His248. A disordered region spans residues 363–391 (EDTLQGKSVNGINFDDELSTSDDTSGSGG).

The protein belongs to the PPP phosphatase family. PP-2A subfamily. Requires Mn(2+) as cofactor.

It catalyses the reaction O-phospho-L-seryl-[protein] + H2O = L-seryl-[protein] + phosphate. It carries out the reaction O-phospho-L-threonyl-[protein] + H2O = L-threonyl-[protein] + phosphate. With respect to regulation, inhibited by okadaic acid, a specific inhibitor of serine/threonine phosphatases of types 1, 2A and 2B. In terms of biological role, serine/threonine-protein phosphatase that plays an important role in controlling colony morphology, filament extension and agar invasion. Down-regulates expression of NRG1 and affects the expression of multiple filament-specific transcripts in response to serum and 37 degrees Celsius. Plays a crucial role in virulence in a mouse model of systemic candidiasis. This chain is Serine/threonine-protein phosphatase PP2A-like PPG1, found in Candida albicans (strain SC5314 / ATCC MYA-2876) (Yeast).